Reading from the N-terminus, the 291-residue chain is Pyridoxal 5'-phosphate synthase subunit PdxS (291 aa).

Asp-23 contributes to the D-ribose 5-phosphate binding site. Catalysis depends on Lys-80, which acts as the Schiff-base intermediate with D-ribose 5-phosphate. Gly-152 provides a ligand contact to D-ribose 5-phosphate. Arg-164 serves as a coordination point for D-glyceraldehyde 3-phosphate. D-ribose 5-phosphate-binding positions include Gly-213 and Gly-234–Ser-235.

Belongs to the PdxS/SNZ family. In the presence of PdxT, forms a dodecamer of heterodimers.

The enzyme catalyses aldehydo-D-ribose 5-phosphate + D-glyceraldehyde 3-phosphate + L-glutamine = pyridoxal 5'-phosphate + L-glutamate + phosphate + 3 H2O + H(+). Its pathway is cofactor biosynthesis; pyridoxal 5'-phosphate biosynthesis. Functionally, catalyzes the formation of pyridoxal 5'-phosphate from ribose 5-phosphate (RBP), glyceraldehyde 3-phosphate (G3P) and ammonia. The ammonia is provided by the PdxT subunit. Can also use ribulose 5-phosphate and dihydroxyacetone phosphate as substrates, resulting from enzyme-catalyzed isomerization of RBP and G3P, respectively. This Bifidobacterium adolescentis (strain ATCC 15703 / DSM 20083 / NCTC 11814 / E194a) protein is Pyridoxal 5'-phosphate synthase subunit PdxS.